We begin with the raw amino-acid sequence, 318 residues long: Trans-prenyltransferase (318 aa).

A helical transmembrane segment spans residues 1–21 (MLHLIYISIIVVLIIILISYT). Lys85, Arg88, and His122 together coordinate isopentenyl diphosphate. Mg(2+)-binding residues include Asp129 and Asp135. Dimethylallyl diphosphate is bound at residue Arg140. Residue Arg141 coordinates isopentenyl diphosphate. 3 residues coordinate dimethylallyl diphosphate: Lys216, Thr217, and Gln254.

This sequence belongs to the FPP/GGPP synthase family. Asfivirus trans-prenyltransferase subfamily. It depends on Mg(2+) as a cofactor.

It is found in the host endoplasmic reticulum. The protein resides in the host membrane. The enzyme catalyses isopentenyl diphosphate + dimethylallyl diphosphate = (2E)-geranyl diphosphate + diphosphate. The catalysed reaction is isopentenyl diphosphate + (2E)-geranyl diphosphate = (2E,6E)-farnesyl diphosphate + diphosphate. It carries out the reaction isopentenyl diphosphate + (2E,6E)-farnesyl diphosphate = (2E,6E,10E)-geranylgeranyl diphosphate + diphosphate. It catalyses the reaction isopentenyl diphosphate + (2E,6E,10E)-geranylgeranyl diphosphate = (2E,6E,10E,14E)-geranylfarnesyl diphosphate + diphosphate. It participates in isoprenoid biosynthesis; farnesyl diphosphate biosynthesis; farnesyl diphosphate from geranyl diphosphate and isopentenyl diphosphate: step 1/1. Its pathway is isoprenoid biosynthesis; geranyl diphosphate biosynthesis; geranyl diphosphate from dimethylallyl diphosphate and isopentenyl diphosphate: step 1/1. It functions in the pathway isoprenoid biosynthesis; geranylgeranyl diphosphate biosynthesis; geranylgeranyl diphosphate from farnesyl diphosphate and isopentenyl diphosphate: step 1/1. Its function is as follows. Trans-prenyltransferase that catalyzes the sequential condensation of isopentenyl diphosphate (IPP) with different allylic diphosphates, such as dimethylallyl diphosphate (DMAPP), geranyl diphosphate (GPP), farnesyl diphosphate (FPP) and geranylgeranyl diphosphate (GGPP), farnesyl diphosphate being the best allylic substrate. The protein is Trans-prenyltransferase of African swine fever virus (isolate Warthog/Namibia/Wart80/1980) (ASFV).